The chain runs to 157 residues: MSKVSGGGPCPRRRDGVDPALRSRARRRALQAVYAWQISGGVAKQVIAHFAHEQAYEVADLVYFEDLVEGVLTHCAELDEKLTPYLDRTIEEVDAIERAVLRLGAYELLYRQDVPYRVVINEAIMTAKRFGSKYGHTYVNGVLDRAALALRKVEVLG.

It belongs to the NusB family.

Involved in transcription antitermination. Required for transcription of ribosomal RNA (rRNA) genes. Binds specifically to the boxA antiterminator sequence of the ribosomal RNA (rrn) operons. The polypeptide is Transcription antitermination protein NusB (Xylella fastidiosa (strain M12)).